A 1299-amino-acid polypeptide reads, in one-letter code: Tenascin-N (1299 aa).

The signal sequence occupies residues 1–28; sequence MSLQEMFRFPMGLLLGSVLLVASAPATL. 3 consecutive EGF-like domains span residues 167 to 198, 199 to 229, and 230 to 260; these read ERLA…ADCG, YPAC…EDCS, and EKRC…LDCA. 9 disulfides stabilise this stretch: Cys-171/Cys-181, Cys-175/Cys-186, Cys-188/Cys-197, Cys-202/Cys-212, Cys-206/Cys-217, Cys-219/Cys-228, Cys-233/Cys-243, Cys-237/Cys-248, and Cys-250/Cys-259. 9 consecutive Fibronectin type-III domains span residues 264–352, 353–444, 445–532, 533–623, 624–709, 710–800, 801–886, 887–976, and 977–1063; these read TPQG…TDLA, VLGT…TEID, SPTN…TEID, SPAN…IDSP, KNLV…TDID, SPQN…IDSP, QNLV…TEID, GPKN…LDPP, and RNLR…VGAR. The segment at 605–624 is disordered; that stretch reads GDRESKKADTNAPTDIDSPK. Positions 960–977 are enriched in basic and acidic residues; sequence QESKKADTKAQTELDPPR. Positions 960-982 are disordered; the sequence is QESKKADTKAQTELDPPRNLRPS. Residues 1061 to 1278 form the Fibrinogen C-terminal domain; it reads GARFPHPSDC…YVELKIRPHG (218 aa). An N-linked (GlcNAc...) asparagine glycan is attached at Asn-1149.

This sequence belongs to the tenascin family. Homohexamer. Not detected in normal adult mammary tissues or brain but expressed in most breast tumors and brain tumors, such as glioblastomas, astrocytomas and oligodendrogliomas, tested. In brain tumors, detected around the endothelial cell layer of the clood vessels.

It is found in the secreted. The protein localises to the extracellular space. Its subcellular location is the extracellular matrix. In terms of biological role, extracellular matrix protein that seems to be a ligand for ITGA8:ITGB1, ITGAV:ITGB1 and ITGA4:ITGB1. Involved in neurite outgrowth and cell migration in hippocampal explants. During endochondral bone formation, inhibits proliferation and differentiation of proteoblasts mediated by canonical WNT signaling. In tumors, stimulates angiogenesis by elongation, migration and sprouting of endothelial cells. Expressed in most mammary tumors, may facilitate tumorigenesis by supporting the migratory behavior of breast cancer cells. This chain is Tenascin-N, found in Homo sapiens (Human).